The primary structure comprises 132 residues: Large ribosomal subunit protein uL14 (132 aa).

This sequence belongs to the universal ribosomal protein uL14 family. Part of the 50S ribosomal subunit. Forms a cluster with proteins L3 and L24e, part of which may contact the 16S rRNA in 2 intersubunit bridges.

Binds to 23S rRNA. Forms part of two intersubunit bridges in the 70S ribosome. The sequence is that of Large ribosomal subunit protein uL14 from Natronomonas pharaonis (strain ATCC 35678 / DSM 2160 / CIP 103997 / JCM 8858 / NBRC 14720 / NCIMB 2260 / Gabara) (Halobacterium pharaonis).